We begin with the raw amino-acid sequence, 750 residues long: MIIRSPEPDVKILVDRDPIKTSFEEWARPGHFSRTIAKGPDTTTWIWNLHADAHDFDSQTSDLEEISRKVFSAHFGQLSIIFLWLSGMYFHGARFSNYEAWLSDPTHIGPSAQVVWPIVGQEILNGDVGGGFRGIQITSGFFQIWRASGITNELQLYCTAIGALVFAALMLFAGWFHYHKAAPKLAWFQDVESMLNHHLAGLLGLGSLSWAGHQVHVSLPINQFLNAGVDPKEIPLPHEFILNRDLLAQLYPSFAEGATPFFTLNWSKYAEFLTFRGGLDPVTGGLWLTDIAHHHLAIAILFLVAGHMYRTNWGIGHGIKDILEAHKGPFTGQGHKGLYEILTTSWHAQLSLNLAMLGSLTIVVAHHMYSMPPYPYLATDYGTQLSLFTHHMWIGGFLIVGAAAHAAIFMVRDYDPTTRYNDLLDRVLRHRDAIISHLNWVCIFLGFHSFGLYIHNDTMSALGRPQDMFSDTAIQLQPVFAQWIQNTHALAPGATAPGATTSTSLTWGGGDLVAVGGKVALLPIPLGTADFLVHHIHAFTIHVTVLILLKGVLFARSSRLIPDKANLGFRFPCDGPGRGGTCQVSAWDHVFLGLFWMYNSISVVIFHFSWKMQSDVWGSISDQGVVTHITGGNFAQSSTTINGWLRDFLWAQASQVIQSYGSSLSAYGLFFLGAHFVWAFSLMFLFSGRGYWQELIESIVWAHNKLKVAPATQPRALSIVQGRAVGVTHYLLGGIATTWAFFLARIIAVG.

Transmembrane regions (helical) follow at residues 70 to 93 (VFSA…FHGA), 156 to 179 (LYCT…FHYH), 195 to 219 (LNHH…HVSL), 291 to 309 (IAHH…GHMY), 346 to 369 (WHAQ…HHMY), 385 to 411 (LSLF…IFMV), 433 to 455 (AIIS…LYIH), and 531 to 549 (FLVH…LILL). Residues C573 and C582 each contribute to the [4Fe-4S] cluster site. Transmembrane regions (helical) follow at residues 589-610 (HVFL…HFSW) and 664-686 (LSAY…MFLF). H675 is a chlorophyll a' binding site. M683 and Y691 together coordinate chlorophyll a. W692 is a binding site for phylloquinone. The chain crosses the membrane as a helical span at residues 724–744 (AVGVTHYLLGGIATTWAFFLA).

Belongs to the PsaA/PsaB family. As to quaternary structure, the PsaA/B heterodimer binds the P700 chlorophyll special pair and subsequent electron acceptors. PSI consists of a core antenna complex that captures photons, and an electron transfer chain that converts photonic excitation into a charge separation. The eukaryotic PSI reaction center is composed of at least 11 subunits. Requires P700 is a chlorophyll a/chlorophyll a' dimer, A0 is one or more chlorophyll a, A1 is one or both phylloquinones and FX is a shared 4Fe-4S iron-sulfur center. as cofactor.

It localises to the plastid. The protein resides in the chloroplast thylakoid membrane. The enzyme catalyses reduced [plastocyanin] + hnu + oxidized [2Fe-2S]-[ferredoxin] = oxidized [plastocyanin] + reduced [2Fe-2S]-[ferredoxin]. PsaA and PsaB bind P700, the primary electron donor of photosystem I (PSI), as well as the electron acceptors A0, A1 and FX. PSI is a plastocyanin-ferredoxin oxidoreductase, converting photonic excitation into a charge separation, which transfers an electron from the donor P700 chlorophyll pair to the spectroscopically characterized acceptors A0, A1, FX, FA and FB in turn. Oxidized P700 is reduced on the lumenal side of the thylakoid membrane by plastocyanin. In Morus indica (Mulberry), this protein is Photosystem I P700 chlorophyll a apoprotein A1.